Consider the following 89-residue polypeptide: Large ribosomal subunit protein uL23cz/uL23cy (89 aa).

This sequence belongs to the universal ribosomal protein uL23 family. In terms of assembly, part of the 50S ribosomal subunit.

Its subcellular location is the plastid. The protein localises to the chloroplast. In terms of biological role, binds to 23S rRNA. This chain is Large ribosomal subunit protein uL23cz/uL23cy (rpl23-A), found in Pelargonium hortorum (Common geranium).